The primary structure comprises 147 residues: Protein disulfide isomerase-like 5-1 (147 aa).

The N-terminal stretch at 1–29 (MDLAPGRRARLLVALALVVLVALAARSGA) is a signal peptide. Residues 30–137 (EVITLTEETF…LKNFVSDEAE (108 aa)) enclose the Thioredoxin domain. Residues Cys59 and Cys62 each act as nucleophile in the active site. Cys59 and Cys62 are joined by a disulfide.

It belongs to the protein disulfide isomerase family.

In terms of biological role, acts as a protein-folding catalyst that interacts with nascent polypeptides to catalyze the formation, isomerization, and reduction or oxidation of disulfide bonds. May play a role in storage protein biogenesis. This Oryza sativa subsp. japonica (Rice) protein is Protein disulfide isomerase-like 5-1 (PDIL5-1).